The chain runs to 261 residues: Carbonic anhydrase 1 (261 aa).

Residues 1-40 are disordered; the sequence is MASPDWGYDDKNGPEQWSKLYPIANGNNQSPVDIKTSETK. At A2 the chain carries N-acetylalanine. The 258-residue stretch at 4 to 261 folds into the Alpha-carbonic anhydrase domain; the sequence is PDWGYDDKNG…LKGRTVRASF (258 aa). The active-site Proton donor/acceptor is the H65. Zn(2+) contacts are provided by H95, H97, and H120. Substrate-binding positions include T200 and 200-201; that span reads TH. Positions 241–261 are disordered; sequence PMQHNNRPTQPLKGRTVRASF.

It belongs to the alpha-carbonic anhydrase family. The cofactor is Zn(2+).

The protein localises to the cytoplasm. It carries out the reaction hydrogencarbonate + H(+) = CO2 + H2O. The enzyme catalyses urea = cyanamide + H2O. Its activity is regulated as follows. Inhibited by acetazolamide. Its function is as follows. Catalyzes the reversible hydration of carbon dioxide. Can hydrate cyanamide to urea. The polypeptide is Carbonic anhydrase 1 (CA1) (Pan troglodytes (Chimpanzee)).